The chain runs to 426 residues: MWLLLVCVVVGGFYTAWNIGANDVANAVGPSVGAGALTLKQAVLIAAVFEFLGAVLLGDRVIGTIESGLVAPSGHVLSSQDYVFGMTAALLATGVWLQIASFCGWPVSTTHAIVGAVLGFGIILKEDAVIYWNSCGRVFVSWLASPIIGGYFAFLIFSFIRKAILYKKDPVSAMVRIAPFLSAIIIFALGLVLILSGAVAPVISFSPALRIVCGLSLFAFFFTIWGIRFFKLAILPQEVLPGTLLDRLLSKSTDYGRKYLIVERIFAYLQMIIACFMSFAHGSNDVANAIAPVAGIYRTLYPQSYSSKVLLVFMSLGGLGLVCGLATWGWRVIDTIGKKITELTPSRGFSVGMSSAITIAAASSLGFPISTTHVVVGSVLGIGFARGLRAINLRIIKDIVLSWFITVPAGAALSIVFFLLLRALFC.

The next 11 helical transmembrane spans lie at 1 to 21 (MWLL…NIGA), 37 to 57 (LTLK…AVLL), 83 to 103 (VFGM…ASFC), 104 to 124 (GWPV…GIIL), 140 to 160 (VSWL…FSFI), 183 to 203 (AIII…APVI), 207 to 227 (PALR…IWGI), 260 to 280 (LIVE…MSFA), 309 to 329 (VLLV…ATWG), 365 to 385 (LGFP…IGFA), and 399 to 419 (IVLS…VFFL).

This sequence belongs to the inorganic phosphate transporter (PiT) (TC 2.A.20) family.

Its subcellular location is the cell membrane. Potential transporter for phosphate. The polypeptide is Putative phosphate permease CT_962 (Chlamydia trachomatis serovar D (strain ATCC VR-885 / DSM 19411 / UW-3/Cx)).